Reading from the N-terminus, the 388-residue chain is Probable RNA-binding protein sce3 (388 aa).

The tract at residues 18 to 84 (ESFGSTNWAD…GGMGSGYQRD (67 aa)) is disordered. Residues 38 to 50 (DRTTSTYRATPSS) are compositionally biased toward polar residues. 3 positions are modified to phosphoserine: Ser-49, Ser-50, and Ser-60. At Thr-61 the chain carries Phosphothreonine. Phosphoserine is present on residues Ser-64, Ser-67, and Ser-71. Residues 94 to 169 (FTAHVGNLSF…RPVRITVAEP (76 aa)) form the RRM domain. Positions 171 to 185 (RSFAREERSTGDWVR) are enriched in basic and acidic residues. Residues 171–388 (RSFAREERST…WTKIGKGRKH (218 aa)) form a disordered region. Ser-197 bears the Phosphoserine mark. Residues 208–229 (RFRDPARDPSDRVREEPREWVR) show a composition bias toward basic and acidic residues. Residues 248–257 (PRSSSNVNTE) show a composition bias toward polar residues. A phosphoserine mark is found at Ser-250, Ser-251, and Ser-252. The span at 258 to 268 (ATPSATTTTSS) shows a compositional bias: low complexity. Basic and acidic residues predominate over residues 289 to 349 (RVEEKLAKRT…LGDGEKKSSE (61 aa)). Ser-347 bears the Phosphoserine mark.

The protein localises to the cytoplasm. The protein is Probable RNA-binding protein sce3 (sce3) of Schizosaccharomyces pombe (strain 972 / ATCC 24843) (Fission yeast).